The primary structure comprises 181 residues: Shikimate kinase (181 aa).

17–22 (GAGKTT) provides a ligand contact to ATP. T21 contributes to the Mg(2+) binding site. The substrate site is built by D39, R63, and G85. Position 122 (R122) interacts with ATP. R141 is a binding site for substrate.

Belongs to the shikimate kinase family. As to quaternary structure, monomer. Mg(2+) serves as cofactor.

Its subcellular location is the cytoplasm. It carries out the reaction shikimate + ATP = 3-phosphoshikimate + ADP + H(+). The protein operates within metabolic intermediate biosynthesis; chorismate biosynthesis; chorismate from D-erythrose 4-phosphate and phosphoenolpyruvate: step 5/7. Catalyzes the specific phosphorylation of the 3-hydroxyl group of shikimic acid using ATP as a cosubstrate. This is Shikimate kinase from Trichormus variabilis (strain ATCC 29413 / PCC 7937) (Anabaena variabilis).